Here is a 323-residue protein sequence, read N- to C-terminus: tRNA U34 carboxymethyltransferase (323 aa).

Residues K91, W105, K110, G130, 180 to 181 (IE), M196, Y200, and R315 each bind carboxy-S-adenosyl-L-methionine.

Belongs to the class I-like SAM-binding methyltransferase superfamily. CmoB family. In terms of assembly, homotetramer.

It catalyses the reaction carboxy-S-adenosyl-L-methionine + 5-hydroxyuridine(34) in tRNA = 5-carboxymethoxyuridine(34) in tRNA + S-adenosyl-L-homocysteine + H(+). Catalyzes carboxymethyl transfer from carboxy-S-adenosyl-L-methionine (Cx-SAM) to 5-hydroxyuridine (ho5U) to form 5-carboxymethoxyuridine (cmo5U) at position 34 in tRNAs. This chain is tRNA U34 carboxymethyltransferase, found in Geobacter sp. (strain M21).